The primary structure comprises 171 residues: Co-chaperone protein HscB (171 aa).

In terms of domain architecture, J spans 2–74 (DYFTLFGLPA…LTRAEYLLSL (73 aa)).

This sequence belongs to the HscB family. In terms of assembly, interacts with HscA and stimulates its ATPase activity. Interacts with IscU.

Functionally, co-chaperone involved in the maturation of iron-sulfur cluster-containing proteins. Seems to help targeting proteins to be folded toward HscA. The polypeptide is Co-chaperone protein HscB (Salmonella choleraesuis (strain SC-B67)).